We begin with the raw amino-acid sequence, 412 residues long: Type II methyltransferase M.Sau3AI (412 aa).

Residues 4-402 enclose the SAM-dependent MTase C5-type domain; that stretch reads IKVVELFAGV…NQIEKIDSIT (399 aa). The active site involves Cys-85.

The protein belongs to the class I-like SAM-binding methyltransferase superfamily. C5-methyltransferase family.

It catalyses the reaction a 2'-deoxycytidine in DNA + S-adenosyl-L-methionine = a 5-methyl-2'-deoxycytidine in DNA + S-adenosyl-L-homocysteine + H(+). In terms of biological role, a methylase that recognizes the double-stranded sequence 5'-GATC-3', methylates C-4 on both strands and protects the DNA from cleavage by the Sau3AI endonuclease. The protein is Type II methyltransferase M.Sau3AI (sau3AIM) of Staphylococcus aureus.